A 30-amino-acid polypeptide reads, in one-letter code: Cyclotide vdif-A (30 aa).

The cyclopeptide (Gly-Asn) cross-link spans 1 to 30 (GIPCGESCVFIPCISSVVGCSCKSKVCYRN). 3 disulfide bridges follow: cysteine 4–cysteine 20, cysteine 8–cysteine 22, and cysteine 13–cysteine 27.

This sequence belongs to the cyclotide family. Bracelet subfamily. This is a cyclic peptide.

In terms of biological role, probably participates in a plant defense mechanism. The sequence is that of Cyclotide vdif-A from Viola diffusa.